Consider the following 335-residue polypeptide: Ketol-acid reductoisomerase (NADP(+)) (335 aa).

The KARI N-terminal Rossmann domain occupies 2-182 (AKIIYDNETT…GATRAGVYET (181 aa)). NADP(+) contacts are provided by residues 25–28 (YGSQ), Arg-48, Ser-51, Ser-53, and 83–86 (DENQ). Residue His-108 is part of the active site. Residue Gly-134 coordinates NADP(+). Positions 183-328 (TFREETETDL…KQIRANIPWL (146 aa)) constitute a KARI C-terminal knotted domain. Positions 191, 195, 227, and 231 each coordinate Mg(2+). A substrate-binding site is contributed by Ser-252.

This sequence belongs to the ketol-acid reductoisomerase family. It depends on Mg(2+) as a cofactor.

It catalyses the reaction (2R)-2,3-dihydroxy-3-methylbutanoate + NADP(+) = (2S)-2-acetolactate + NADPH + H(+). The catalysed reaction is (2R,3R)-2,3-dihydroxy-3-methylpentanoate + NADP(+) = (S)-2-ethyl-2-hydroxy-3-oxobutanoate + NADPH + H(+). The protein operates within amino-acid biosynthesis; L-isoleucine biosynthesis; L-isoleucine from 2-oxobutanoate: step 2/4. Its pathway is amino-acid biosynthesis; L-valine biosynthesis; L-valine from pyruvate: step 2/4. In terms of biological role, involved in the biosynthesis of branched-chain amino acids (BCAA). Catalyzes an alkyl-migration followed by a ketol-acid reduction of (S)-2-acetolactate (S2AL) to yield (R)-2,3-dihydroxy-isovalerate. In the isomerase reaction, S2AL is rearranged via a Mg-dependent methyl migration to produce 3-hydroxy-3-methyl-2-ketobutyrate (HMKB). In the reductase reaction, this 2-ketoacid undergoes a metal-dependent reduction by NADPH to yield (R)-2,3-dihydroxy-isovalerate. The sequence is that of Ketol-acid reductoisomerase (NADP(+)) from Methanosarcina barkeri (strain Fusaro / DSM 804).